Here is a 734-residue protein sequence, read N- to C-terminus: Ribosomal RNA large subunit methyltransferase K/L (734 aa).

Residues 43 to 154 form the THUMP domain; the sequence is VGYRSCLWSR…RNQLTLSLDL (112 aa).

The protein belongs to the methyltransferase superfamily. RlmKL family.

The protein resides in the cytoplasm. The catalysed reaction is guanosine(2445) in 23S rRNA + S-adenosyl-L-methionine = N(2)-methylguanosine(2445) in 23S rRNA + S-adenosyl-L-homocysteine + H(+). It carries out the reaction guanosine(2069) in 23S rRNA + S-adenosyl-L-methionine = N(2)-methylguanosine(2069) in 23S rRNA + S-adenosyl-L-homocysteine + H(+). Functionally, specifically methylates the guanine in position 2445 (m2G2445) and the guanine in position 2069 (m7G2069) of 23S rRNA. The sequence is that of Ribosomal RNA large subunit methyltransferase K/L from Hydrogenovibrio crunogenus (strain DSM 25203 / XCL-2) (Thiomicrospira crunogena).